The primary structure comprises 1077 residues: MPRRKQQAPRRSAAYVPEEELKAAEIDEEHVEDDGLSLDIQESEYMCNEETEIKEAQSYQNSPVSSATNQDAGYGSPFSESSDQLAHFKGSSSREEKEDPQCPDSVSYPQDSLAQIKAVYANLFSESCWSSLALDLKKSGSTTSTNDASQKESSAPTPTPPTCPVSTTGPTTSTPSTSCSSSTSHSSTTSTSSSSGYDWHQAALAKTLQQTSSYGLLPEPSLFSTVQLYRQNNKLYGSVFTGASKFRCKDCSAAYDTLVELTVHMNETGHYRDDNRDKDSEKTKRWSKPRKRSLMEMEGKEDAQKVLKCMYCGHSFESLQDLSVHMIKTKHYQKVPLKEPVPAITKLVPSTKKRALQDLAPPCSPEPAGMAAEVALSESAKDQKAANPYVTPNNRYGYQNGASYTWQFEARKAQILKCMECGSSHDTLQQLTAHMMVTGHFLKVTTSASKKGKQLVLDPVVEEKIQSIPLPPTTHTRLPASSIKKQPDSPAGSTTSEEKKEPEKEKPPVAGDAEKIKEESEDSLEKFEPSTLYPYLREEDLDDSPKGGLDILKSLENTVSTAISKAQNGAPSWGGYPSIHAAYQLPGTVKPLPAAVQSVQVQPSYAGGVKSLSSAEHNALLHSPGSLTPPPHKSNVSAMEELVEKVTGKVNIKKEERPPEKEKSSLAKAASPIAKENKDFPKTEEVSGKPQKKGPEAETGKAKKEGPLDVHTPNGTEPLKAKVTNGCNNLGIIMDHSPEPSFINPLSALQSIMNTHLGKVSKPVSPSLDPLAMLYKISNSMLDKPVYPATPVKQADAIDRYYYENSDQPIDLTKSKNKPLVSSVADSVASPLRESALMDISDMVKNLTGRLTPKSSTPSTVSEKSDADGSSFEEALDELSPVHKRKGRQSNWNPQHLLILQAQFASSLRETTEGKYIMSDLGPQERVHISKFTGLSMTTISHWLANVKYQLRRTGGTKFLKNLDTGHPVFFCNDCASQFRTASTYISHLETHLGFSLKDLSKLPLNQIQEQQNVSKVLTNKTLGPLGATEEDLGSTFQCKLCNRTFASKHAVKLHLSKTHGKSPEDHLIYVTELEKQ.

3 disordered regions span residues 1 to 109 (MPRR…VSYP), 139 to 195 (SGST…SSSS), and 269 to 298 (GHYR…MEME). Positions 26 to 36 (IDEEHVEDDGL) are enriched in acidic residues. Polar residues-rich tracts occupy residues 57–71 (QSYQ…TNQD) and 139–152 (SGST…SQKE). The segment covering 164 to 195 (PVSTTGPTTSTPSTSCSSSTSHSSTTSTSSSS) has biased composition (low complexity). 2 C2H2-type zinc fingers span residues 246 to 270 (FRCK…ETGH) and 307 to 331 (LKCM…KTKH). The segment covering 269 to 284 (GHYRDDNRDKDSEKTK) has biased composition (basic and acidic residues). The C2H2-type 3; atypical zinc-finger motif lies at 416–440 (LKCMECGSSHDTLQQLTAHMMVTGH). Disordered regions lie at residues 467–549 (SIPL…KGGL) and 647–720 (TGKV…EPLK). Basic and acidic residues-rich tracts occupy residues 496–528 (SEEK…EKFE), 647–665 (TGKV…EKSS), and 675–708 (KENK…EGPL). Ser765 carries the phosphoserine modification. A disordered region spans residues 848–873 (TGRLTPKSSTPSTVSEKSDADGSSFE). The segment covering 853–862 (PKSSTPSTVS) has biased composition (polar residues). Residues 885–955 (RKGRQSNWNP…NVKYQLRRTG (71 aa)) constitute a DNA-binding region (homeobox; atypical). 2 consecutive C2H2-type zinc fingers follow at residues 970 to 992 (FFCN…LETH) and 1037 to 1060 (FQCK…SKTH).

Belongs to the teashirt C2H2-type zinc-finger protein family. In terms of assembly, interacts (via homeobox domain) with APBB1 (via PID domain 1). In terms of tissue distribution, expressed in brain; strongly reduced in post-mortem elderly subjects with Alzheimer disease.

Its subcellular location is the nucleus. Functionally, probable transcriptional regulator involved in developmental processes. May act as a transcriptional repressor (Potential). The protein is Teashirt homolog 1 (TSHZ1) of Homo sapiens (Human).